Consider the following 382-residue polypeptide: UDP-N-acetylglucosamine--N-acetylmuramyl-(pentapeptide) pyrophosphoryl-undecaprenol N-acetylglucosamine transferase (382 aa).

UDP-N-acetyl-alpha-D-glucosamine-binding positions include 17–19 (TAG), Asn-137, Arg-179, Ser-213, and Gln-308.

It belongs to the glycosyltransferase 28 family. MurG subfamily.

It is found in the cell membrane. It catalyses the reaction di-trans,octa-cis-undecaprenyl diphospho-N-acetyl-alpha-D-muramoyl-L-alanyl-D-glutamyl-meso-2,6-diaminopimeloyl-D-alanyl-D-alanine + UDP-N-acetyl-alpha-D-glucosamine = di-trans,octa-cis-undecaprenyl diphospho-[N-acetyl-alpha-D-glucosaminyl-(1-&gt;4)]-N-acetyl-alpha-D-muramoyl-L-alanyl-D-glutamyl-meso-2,6-diaminopimeloyl-D-alanyl-D-alanine + UDP + H(+). Its pathway is cell wall biogenesis; peptidoglycan biosynthesis. Its function is as follows. Cell wall formation. Catalyzes the transfer of a GlcNAc subunit on undecaprenyl-pyrophosphoryl-MurNAc-pentapeptide (lipid intermediate I) to form undecaprenyl-pyrophosphoryl-MurNAc-(pentapeptide)GlcNAc (lipid intermediate II). The polypeptide is UDP-N-acetylglucosamine--N-acetylmuramyl-(pentapeptide) pyrophosphoryl-undecaprenol N-acetylglucosamine transferase (Rhodococcus opacus (strain B4)).